The sequence spans 270 residues: Phosphoribosylformylglycinamidine synthase subunit PurQ (270 aa).

A Glutamine amidotransferase type-1 domain is found at 5–251; that stretch reads ALVLHATGTN…VIRERDSEEE (247 aa). Catalysis depends on cysteine 95, which acts as the Nucleophile. Residues histidine 236 and glutamate 238 contribute to the active site.

In terms of assembly, part of the FGAM synthase complex composed of 1 PurL, 1 PurQ and 2 PurS subunits.

Its subcellular location is the cytoplasm. The enzyme catalyses N(2)-formyl-N(1)-(5-phospho-beta-D-ribosyl)glycinamide + L-glutamine + ATP + H2O = 2-formamido-N(1)-(5-O-phospho-beta-D-ribosyl)acetamidine + L-glutamate + ADP + phosphate + H(+). It carries out the reaction L-glutamine + H2O = L-glutamate + NH4(+). The protein operates within purine metabolism; IMP biosynthesis via de novo pathway; 5-amino-1-(5-phospho-D-ribosyl)imidazole from N(2)-formyl-N(1)-(5-phospho-D-ribosyl)glycinamide: step 1/2. Its function is as follows. Part of the phosphoribosylformylglycinamidine synthase complex involved in the purines biosynthetic pathway. Catalyzes the ATP-dependent conversion of formylglycinamide ribonucleotide (FGAR) and glutamine to yield formylglycinamidine ribonucleotide (FGAM) and glutamate. The FGAM synthase complex is composed of three subunits. PurQ produces an ammonia molecule by converting glutamine to glutamate. PurL transfers the ammonia molecule to FGAR to form FGAM in an ATP-dependent manner. PurS interacts with PurQ and PurL and is thought to assist in the transfer of the ammonia molecule from PurQ to PurL. This is Phosphoribosylformylglycinamidine synthase subunit PurQ from Treponema denticola (strain ATCC 35405 / DSM 14222 / CIP 103919 / JCM 8153 / KCTC 15104).